An 89-amino-acid polypeptide reads, in one-letter code: Small ribosomal subunit protein uS15 (89 aa).

The protein belongs to the universal ribosomal protein uS15 family. In terms of assembly, part of the 30S ribosomal subunit. Forms a bridge to the 50S subunit in the 70S ribosome, contacting the 23S rRNA.

Its function is as follows. One of the primary rRNA binding proteins, it binds directly to 16S rRNA where it helps nucleate assembly of the platform of the 30S subunit by binding and bridging several RNA helices of the 16S rRNA. Functionally, forms an intersubunit bridge (bridge B4) with the 23S rRNA of the 50S subunit in the ribosome. This Maridesulfovibrio salexigens (strain ATCC 14822 / DSM 2638 / NCIMB 8403 / VKM B-1763) (Desulfovibrio salexigens) protein is Small ribosomal subunit protein uS15.